The chain runs to 498 residues: NAD(P)H-quinone oxidoreductase subunit 2, chloroplastic (498 aa).

14 helical membrane passes run 18-38, 51-71, 87-107, 111-131, 134-154, 168-188, 211-231, 244-264, 278-298, 306-326, 337-357, 379-399, 411-431, and 470-490; these read LTIL…VIDL, ISMV…GFFT, FFLL…ILCS, LAEF…LSCA, LVTI…LSGY, FLLM…LLYG, IIYL…SLFP, PTPV…ALFT, WHVA…LIAV, MLAF…LSAD, YTFI…LFGL, FSLV…GFFG, GLYS…YYYL, and IAMI…DPII.

Belongs to the complex I subunit 2 family. As to quaternary structure, NDH is composed of at least 16 different subunits, 5 of which are encoded in the nucleus.

It localises to the plastid. The protein localises to the chloroplast thylakoid membrane. It carries out the reaction a plastoquinone + NADH + (n+1) H(+)(in) = a plastoquinol + NAD(+) + n H(+)(out). The enzyme catalyses a plastoquinone + NADPH + (n+1) H(+)(in) = a plastoquinol + NADP(+) + n H(+)(out). Functionally, NDH shuttles electrons from NAD(P)H:plastoquinone, via FMN and iron-sulfur (Fe-S) centers, to quinones in the photosynthetic chain and possibly in a chloroplast respiratory chain. The immediate electron acceptor for the enzyme in this species is believed to be plastoquinone. Couples the redox reaction to proton translocation, and thus conserves the redox energy in a proton gradient. This chain is NAD(P)H-quinone oxidoreductase subunit 2, chloroplastic, found in Adiantum capillus-veneris (Maidenhair fern).